Reading from the N-terminus, the 334-residue chain is WD repeat domain 54 (334 aa).

WD repeat units lie at residues 162–206, 208–247, and 250–289; these read GHQT…TLLT, IAGFGVPCPSVQLWQGIVAAGYGNGQVRLYDAGTGALHIQ, and AHARTISALDLAPEVGKLLSAAEDTFVHIWKLNRNPESGS.

Homodimer and homotrimer; forms tight forms of dimers and trimers. Interacts with IZUMO1 and IZUMO1R/JUNO. Post-translationally, cross-linked to tightly form both dimers and trimers by TGM2. Cross-linking enhances the activation of EGF receptor-mediated signaling pathway. Cross-linking is inhibited by EGF. Ubiquitinated. EGF increases ubiquitination. Widely expressed in the ovary and testis (at protein level).

It localises to the vesicle. Its subcellular location is the cytoplasm. The protein localises to the cell membrane. In terms of biological role, plays a role in the adhesion and fusion of the sperm-oocyte membrane through its interactions with IZUMO1 and IZUMO1R/JUNO. When cross-linked to form dimers and trimers, it has a regulatory effect on ERK signaling pathway activity in response to EGF stimulation. Colocalizes with the EGF receptor in WDR54-specific vesicle where it sustains the internalization and controls the degradation of the EGF receptor after EGF stimulation. The protein is WD repeat domain 54 (Wdr54) of Rattus norvegicus (Rat).